Reading from the N-terminus, the 219-residue chain is Asperlin biosynthesis cluster protein I (219 aa).

Residues 97–124 are disordered; the sequence is TGSSDNSPTATGIGAAGLTGDRPSSSGA. The segment covering 105-116 has biased composition (low complexity); sequence TATGIGAAGLTG.

Its pathway is polyketide biosynthesis. Its function is as follows. Part of the gene cluster that mediates the biosynthesis of asperlin, a polyketide showing anti-inflammatory, antitumor and antibiotic activities. The first step of the asperlin biosynthesis is the production of the intermediate 2,4,6-octatrienoic acid by the highly redusing polyketide synthase alnA with cleavage of the PKS product by the esterase alnB. 2,4,6-octatrienoic acid is further converted to asperlin via several steps involving the remaining enzymes from the cluster. The protein is Asperlin biosynthesis cluster protein I of Emericella nidulans (strain FGSC A4 / ATCC 38163 / CBS 112.46 / NRRL 194 / M139) (Aspergillus nidulans).